A 252-amino-acid chain; its full sequence is GTP cyclohydrolase 1 type 2 homolog (252 aa).

A divalent metal cation is bound by residues histidine 63, histidine 64, aspartate 101, histidine 220, and glutamate 224.

The protein belongs to the GTP cyclohydrolase I type 2/NIF3 family. As to quaternary structure, homohexamer.

The polypeptide is GTP cyclohydrolase 1 type 2 homolog (Vibrio cholerae serotype O1 (strain ATCC 39315 / El Tor Inaba N16961)).